The chain runs to 188 residues: Elongation factor P (188 aa).

N6-(3,6-diaminohexanoyl)-5-hydroxylysine is present on Lys34.

Belongs to the elongation factor P family. In terms of processing, may be beta-lysylated on the epsilon-amino group of Lys-34 by the combined action of EpmA and EpmB, and then hydroxylated on the C5 position of the same residue by EpmC (if this protein is present). Lysylation is critical for the stimulatory effect of EF-P on peptide-bond formation. The lysylation moiety may extend toward the peptidyltransferase center and stabilize the terminal 3-CCA end of the tRNA. Hydroxylation of the C5 position on Lys-34 may allow additional potential stabilizing hydrogen-bond interactions with the P-tRNA.

It is found in the cytoplasm. It functions in the pathway protein biosynthesis; polypeptide chain elongation. Involved in peptide bond synthesis. Alleviates ribosome stalling that occurs when 3 or more consecutive Pro residues or the sequence PPG is present in a protein, possibly by augmenting the peptidyl transferase activity of the ribosome. Modification of Lys-34 is required for alleviation. This chain is Elongation factor P, found in Photobacterium profundum (strain SS9).